The chain runs to 236 residues: Purine nucleoside phosphorylase DeoD-type 2 (236 aa).

Position 5 (histidine 5) interacts with a purine D-ribonucleoside. Phosphate contacts are provided by residues glycine 21, arginine 25, arginine 44, and 88-91 (RVGS). A purine D-ribonucleoside is bound by residues 180-182 (DME) and 204-205 (SD). Aspartate 205 functions as the Proton donor in the catalytic mechanism.

It belongs to the PNP/UDP phosphorylase family. Homohexamer; trimer of homodimers.

It catalyses the reaction a purine D-ribonucleoside + phosphate = a purine nucleobase + alpha-D-ribose 1-phosphate. The enzyme catalyses a purine 2'-deoxy-D-ribonucleoside + phosphate = a purine nucleobase + 2-deoxy-alpha-D-ribose 1-phosphate. Catalyzes the reversible phosphorolytic breakdown of the N-glycosidic bond in the beta-(deoxy)ribonucleoside molecules, with the formation of the corresponding free purine bases and pentose-1-phosphate. This chain is Purine nucleoside phosphorylase DeoD-type 2, found in Photobacterium profundum (strain SS9).